Consider the following 119-residue polypeptide: HTH-type transcriptional regulator SarX (119 aa).

A DNA-binding region (H-T-H motif) is located at residues 55 to 78; the sequence is LKTAMDELDLSRTKLLVSIRRLIE.

This sequence belongs to the SarA family.

Its subcellular location is the cytoplasm. In terms of biological role, involved in the regulation of virulence genes. Acts as a repressor of the agr locus and consequently targets genes regulated by the agr system such as sspA, hla and hlb. Binds directly to the agr promoter region. The protein is HTH-type transcriptional regulator SarX (sarX) of Staphylococcus aureus (strain USA300).